The following is a 290-amino-acid chain: L-cysteine S-thiosulfotransferase subunit SoxA (290 aa).

The first 26 residues, 1 to 26 (MPRFTKTKGTLAATALGLALAGAAFA), serve as a signal peptide directing secretion. 2 residues coordinate Zn(2+): Asp78 and Asp81. One can recognise a Cytochrome c domain in the interval 78-171 (DDFDNPAMVF…DMLSLISLQS (94 aa)). Heme c-binding residues include Cys106, Cys109, His110, and Cys143. Position 190 (His190) interacts with Zn(2+). Residues Cys206, Cys209, and His210 each contribute to the heme c site. Residue Arg247 participates in substrate binding. Cys251 contributes to the heme c binding site. Cys251 (cysteine persulfide intermediate) is an active-site residue. Zn(2+) is bound at residue Asp266.

Belongs to the SoxA family. As to quaternary structure, heterodimer of SoxA and SoxX. It depends on heme c as a cofactor. Zn(2+) serves as cofactor. In terms of processing, cysteine persulfide at Cys-251.

The protein resides in the periplasm. The enzyme catalyses L-cysteinyl-[SoxY protein] + thiosulfate + 2 Fe(III)-[cytochrome c] = S-sulfosulfanyl-L-cysteinyl-[SoxY protein] + 2 Fe(II)-[cytochrome c] + 2 H(+). It catalyses the reaction S-sulfanyl-L-cysteinyl-[SoxY protein] + thiosulfate + 2 Fe(III)-[cytochrome c] = S-(2-sulfodisulfanyl)-L-cysteinyl-[SoxY protein] + 2 Fe(II)-[cytochrome c] + 2 H(+). Functionally, C-type diheme cytochrome, which is part of the SoxAX cytochrome complex involved in sulfur oxidation. The SoxAX complex catalyzes the formation of a heterodisulfide bond between the conserved cysteine residue on a sulfur carrier SoxYZ complex subunit SoxY and thiosulfate or other inorganic sulfur substrates. This leads to the liberation of two electrons, which may be transferred from the SoxAX complex to another cytochrome c that then channels them into the respiratory electron transport chain. Some electrons may be used for reductive CO(2) fixation. The protein is L-cysteine S-thiosulfotransferase subunit SoxA of Paracoccus pantotrophus (Thiosphaera pantotropha).